The primary structure comprises 222 residues: UPF0502 protein XCC4136 (222 aa).

It belongs to the UPF0502 family.

This is UPF0502 protein XCC4136 from Xanthomonas campestris pv. campestris (strain ATCC 33913 / DSM 3586 / NCPPB 528 / LMG 568 / P 25).